A 204-amino-acid chain; its full sequence is Large ribosomal subunit protein eL15 (204 aa).

Belongs to the eukaryotic ribosomal protein eL15 family.

This Anopheles gambiae (African malaria mosquito) protein is Large ribosomal subunit protein eL15 (RpL15).